The following is a 310-amino-acid chain: 1-aminocyclopropane-1-carboxylate oxidase 1 (310 aa).

A coiled-coil region spans residues 113-133; it reads EELSKTMDEYVCQLHKFAERL. Residues 158–259 form the Fe2OG dioxygenase domain; it reads PAFGTKVAKY…RLSIATFYNP (102 aa). Fe cation is bound by residues His182, Asp184, and His240. Arg250 provides a ligand contact to 2-oxoglutarate.

Belongs to the iron/ascorbate-dependent oxidoreductase family. It depends on Fe(2+) as a cofactor.

It carries out the reaction 1-aminocyclopropane-1-carboxylate + L-ascorbate + O2 = ethene + L-dehydroascorbate + hydrogen cyanide + CO2 + 2 H2O. The protein operates within alkene biosynthesis; ethylene biosynthesis via S-adenosyl-L-methionine; ethylene from S-adenosyl-L-methionine: step 2/2. Enzyme involved in the ethylene biosynthesis. May promote stem elongation by maximizing the extensibility cells, possibly by activating ethylene biosynthesis, in response to very-long-chain fatty acids (VLCFAs C20:0 to C30:0). The polypeptide is 1-aminocyclopropane-1-carboxylate oxidase 1 (ACO1) (Arabidopsis thaliana (Mouse-ear cress)).